Consider the following 125-residue polypeptide: Oxytocin-neurophysin 1 (125 aa).

An N-terminal signal peptide occupies residues 1 to 19 (MACPSLACCLLGLLALTSA). Residues cysteine 20 and cysteine 25 are joined by a disulfide bond. Glycine 28 bears the Glycine amide mark. Disulfide bonds link cysteine 41/cysteine 85, cysteine 44/cysteine 58, cysteine 52/cysteine 75, cysteine 59/cysteine 65, cysteine 92/cysteine 104, cysteine 98/cysteine 116, and cysteine 105/cysteine 110.

This sequence belongs to the vasopressin/oxytocin family. As to quaternary structure, interacts with oxytocin receptor (Ki=1.5 nM). Interacts with vasopressin V1aR/AVPR1A (Ki=37 nM), V1bR/AVPR1B (Ki=222 nM), and V2R/AVPR2 receptors (Ki=823 nM).

Functionally, neurophysin 1 specifically binds oxytocin. Oxytocin causes contraction of the smooth muscle of the uterus and of the mammary gland. Acts by binding to oxytocin receptor (OXTR). This is Oxytocin-neurophysin 1 (Oxt) from Rattus norvegicus (Rat).